The following is a 313-amino-acid chain: S-methyl-5'-thioadenosine phosphorylase (313 aa).

Phosphate-binding positions include Thr20, 68–69, and 101–102; these read RH and SA. Met203 is a binding site for substrate. Residue Ser204 participates in phosphate binding. Position 227–229 (227–229) interacts with substrate; that stretch reads DYD.

This sequence belongs to the PNP/MTAP phosphorylase family. MTAP subfamily. Homotrimer.

Its subcellular location is the cytoplasm. It localises to the nucleus. It carries out the reaction S-methyl-5'-thioadenosine + phosphate = 5-(methylsulfanyl)-alpha-D-ribose 1-phosphate + adenine. Its pathway is amino-acid biosynthesis; L-methionine biosynthesis via salvage pathway; S-methyl-5-thio-alpha-D-ribose 1-phosphate from S-methyl-5'-thioadenosine (phosphorylase route): step 1/1. Its function is as follows. Catalyzes the reversible phosphorylation of S-methyl-5'-thioadenosine (MTA) to adenine and 5-methylthioribose-1-phosphate. Involved in the breakdown of MTA, a major by-product of polyamine biosynthesis. Responsible for the first step in the methionine salvage pathway after MTA has been generated from S-adenosylmethionine. Has broad substrate specificity with 6-aminopurine nucleosides as preferred substrates. In Ajellomyces capsulatus (strain G186AR / H82 / ATCC MYA-2454 / RMSCC 2432) (Darling's disease fungus), this protein is S-methyl-5'-thioadenosine phosphorylase.